A 199-amino-acid polypeptide reads, in one-letter code: MKIGDVEVRDDVFNVKVKKHVLWEVVKWQLAKRRQGTHSTKTRGEVAYSGRKILPQKGTGNARHGERGVNIFVGGGVAHGPKPRDYEYPLPKRVRKLGLKMALSDKARNNAIIFVDNIDLGKKPKTKKAIEFLKNLGVEKEKVLVVIPEKADVLYKSFRNLPNVRVLLPEGLNVYDVLWANKLVIQKDCLDRIYKKVEA.

Belongs to the universal ribosomal protein uL4 family. In terms of assembly, part of the 50S ribosomal subunit.

One of the primary rRNA binding proteins, this protein initially binds near the 5'-end of the 23S rRNA. It is important during the early stages of 50S assembly. It makes multiple contacts with different domains of the 23S rRNA in the assembled 50S subunit and ribosome. Functionally, forms part of the polypeptide exit tunnel. The chain is Large ribosomal subunit protein uL4 from Aquifex aeolicus (strain VF5).